Here is a 75-residue protein sequence, read N- to C-terminus: Small ribosomal subunit protein bS18 (75 aa).

It belongs to the bacterial ribosomal protein bS18 family. In terms of assembly, part of the 30S ribosomal subunit. Forms a tight heterodimer with protein bS6.

Functionally, binds as a heterodimer with protein bS6 to the central domain of the 16S rRNA, where it helps stabilize the platform of the 30S subunit. The sequence is that of Small ribosomal subunit protein bS18 from Laribacter hongkongensis (strain HLHK9).